A 211-amino-acid chain; its full sequence is Thioredoxin domain-containing protein 9 homolog (211 aa).

Residues 68–178 (YSEIHSEKDF…LEERIARAQV (111 aa)) form the Thioredoxin domain. Positions 184–203 (ESSSLKPKSTTQVRRNVRQS) are enriched in polar residues. The tract at residues 184-211 (ESSSLKPKSTTQVRRNVRQSARSDSDSE) is disordered.

The chain is Thioredoxin domain-containing protein 9 homolog from Arabidopsis thaliana (Mouse-ear cress).